Reading from the N-terminus, the 419-residue chain is Serine hydroxymethyltransferase (419 aa).

(6S)-5,6,7,8-tetrahydrofolate is bound by residues L121 and 125 to 127 (GHL). K230 is modified (N6-(pyridoxal phosphate)lysine). A (6S)-5,6,7,8-tetrahydrofolate-binding site is contributed by 355 to 357 (SPF).

Belongs to the SHMT family. As to quaternary structure, homodimer. Requires pyridoxal 5'-phosphate as cofactor.

Its subcellular location is the cytoplasm. The enzyme catalyses (6R)-5,10-methylene-5,6,7,8-tetrahydrofolate + glycine + H2O = (6S)-5,6,7,8-tetrahydrofolate + L-serine. It functions in the pathway one-carbon metabolism; tetrahydrofolate interconversion. Its pathway is amino-acid biosynthesis; glycine biosynthesis; glycine from L-serine: step 1/1. Its function is as follows. Catalyzes the reversible interconversion of serine and glycine with tetrahydrofolate (THF) serving as the one-carbon carrier. This reaction serves as the major source of one-carbon groups required for the biosynthesis of purines, thymidylate, methionine, and other important biomolecules. Also exhibits THF-independent aldolase activity toward beta-hydroxyamino acids, producing glycine and aldehydes, via a retro-aldol mechanism. The polypeptide is Serine hydroxymethyltransferase (Streptococcus uberis (strain ATCC BAA-854 / 0140J)).